The primary structure comprises 638 residues: Trichohyalin-like protein 1 (638 aa).

One can recognise an EF-hand domain in the interval 49 to 84 (HVFHAVERKLNLLNFDRDGTISFEEFVLAIFSLLNP). The disordered stretch occupies residues 134–638 (SEMASSGQPS…ALEAESLEAQ (505 aa)). Residues 166–179 (LPRNVSEPNDPENQ) are compositionally biased toward polar residues. Basic and acidic residues-rich tracts occupy residues 221 to 246 (IPRE…QRPT), 294 to 309 (DDTK…KDAG), and 318 to 328 (EEPKADAKVAE). Residues 343–357 (DQSVQSRSRNVSETS) are compositionally biased toward polar residues. 6 stretches are compositionally biased toward basic and acidic residues: residues 358 to 372 (SRGE…HERI), 395 to 409 (REND…KDPS), 419 to 435 (EIKE…HSEE), 479 to 490 (RIQDKPVRKEDH), 526 to 548 (AEPH…KQES), and 622 to 631 (AGRENRKALE).

This sequence belongs to the S-100 family.

In Mus musculus (Mouse), this protein is Trichohyalin-like protein 1 (Tchhl1).